Reading from the N-terminus, the 338-residue chain is Secretion system apparatus protein SsaL (338 aa).

This chain is Secretion system apparatus protein SsaL (ssaL), found in Salmonella typhimurium (strain LT2 / SGSC1412 / ATCC 700720).